The chain runs to 506 residues: Glutamyl-tRNA(Gln) amidotransferase subunit A, mitochondrial (506 aa).

Catalysis depends on charge relay system residues lysine 62 and serine 141. The active-site Acyl-ester intermediate is the serine 165.

Belongs to the amidase family. GatA subfamily. In terms of assembly, subunit of the heterotrimeric GatCAB amidotransferase (AdT) complex, composed of A, B and C subunits.

It localises to the mitochondrion. The enzyme catalyses L-glutamyl-tRNA(Gln) + L-glutamine + ATP + H2O = L-glutaminyl-tRNA(Gln) + L-glutamate + ADP + phosphate + H(+). In terms of biological role, allows the formation of correctly charged Gln-tRNA(Gln) through the transamidation of misacylated Glu-tRNA(Gln) in the mitochondria. The reaction takes place in the presence of glutamine and ATP through an activated gamma-phospho-Glu-tRNA(Gln). The polypeptide is Glutamyl-tRNA(Gln) amidotransferase subunit A, mitochondrial (Emericella nidulans (strain FGSC A4 / ATCC 38163 / CBS 112.46 / NRRL 194 / M139) (Aspergillus nidulans)).